A 254-amino-acid chain; its full sequence is Nickel import ATP-binding protein NikD (254 aa).

Residues 2–241 form the ABC transporter domain; sequence PQQIELRNIA…PKHAVTRSLV (240 aa). An ATP-binding site is contributed by 36–43; that stretch reads GGSGSGKS.

This sequence belongs to the ABC transporter superfamily. Nickel importer (TC 3.A.1.5.3) family. The complex is composed of two ATP-binding proteins (NikD and NikE), two transmembrane proteins (NikB and NikC) and a solute-binding protein (NikA).

It localises to the cell inner membrane. The catalysed reaction is Ni(2+)(out) + ATP + H2O = Ni(2+)(in) + ADP + phosphate + H(+). Functionally, part of the ABC transporter complex NikABCDE involved in nickel import. Responsible for energy coupling to the transport system. The chain is Nickel import ATP-binding protein NikD from Escherichia coli (strain UTI89 / UPEC).